The sequence spans 109 residues: Aquaporin-2 (109 aa).

Residues 1-6 (SIAFSR) are Cytoplasmic-facing. Residues 7-27 (AVLAEFLATLLFVFFGLGSAL) traverse the membrane as a helical segment. Over 28–35 (NWPQAMPS) the chain is Extracellular. Residues 36–54 (VLQIAMAFGLAIGTLVQAL) form a helical membrane-spanning segment. The Cytoplasmic segment spans residues 55 to 59 (GHVSG). Residues 60-69 (AHINPAVTVA) constitute an intramembrane region (discontinuously helical). Positions 63 to 65 (NPA) match the NPA 1 motif. Residues 70–80 (CLVGCHVSFLR) are Cytoplasmic-facing. Residues 81–102 (AAFYVAAQLLGAVAGAALLHEI) form a helical membrane-spanning segment. At 103–109 (TPPDIRR) the chain is on the extracellular side.

It belongs to the MIP/aquaporin (TC 1.A.8) family. In terms of assembly, homotetramer. Serine phosphorylation is necessary and sufficient for expression at the apical membrane. Endocytosis is not phosphorylation-dependent. In terms of processing, N-glycosylated.

The protein resides in the apical cell membrane. The protein localises to the basolateral cell membrane. It is found in the cell membrane. It localises to the cytoplasmic vesicle membrane. Its subcellular location is the golgi apparatus. The protein resides in the trans-Golgi network membrane. The enzyme catalyses H2O(in) = H2O(out). The catalysed reaction is glycerol(in) = glycerol(out). In terms of biological role, forms a water-specific channel that provides the plasma membranes of renal collecting duct with high permeability to water, thereby permitting water to move in the direction of an osmotic gradient. Plays an essential role in renal water homeostasis. Could also be permeable to glycerol. In Equus caballus (Horse), this protein is Aquaporin-2.